The following is a 163-amino-acid chain: Troponin C, skeletal muscle (163 aa).

A2 carries the blocked amino end (Ala) modification. 4 consecutive EF-hand domains span residues 18-53 (EMIA…LGQN), 54-89 (PTKE…QMKE), 94-129 (KSEE…TGEH), and 130-163 (VTEE…EGVQ). 18 residues coordinate Ca(2+): D31, D33, D37, E42, D67, D69, S71, T73, E78, D107, N109, D111, E118, D143, N145, D147, R149, and E154.

This sequence belongs to the troponin C family.

Functionally, troponin is the central regulatory protein of striated muscle contraction. Tn consists of three components: Tn-I which is the inhibitor of actomyosin ATPase, Tn-T which contains the binding site for tropomyosin and Tn-C. The binding of calcium to Tn-C abolishes the inhibitory action of Tn on actin filaments. This Gallus gallus (Chicken) protein is Troponin C, skeletal muscle (TNNC2).